A 26-amino-acid chain; its full sequence is PRKCH upstream open reading frame 2 (26 aa).

Interacts with protein kinase C eta as well as other protein kinases including PRKCD, PRKCQ and PRKCE but not with PRKCG or PRKCZ; the interactions lead to inhibition of kinase activity.

Product of an upstream open reading frame (ORF) of PRKCH which regulates translation of the downstream protein kinase C eta (PKC-eta) ORF. Functions as a repressive element that maintains low basal levels of PKC-eta in growing cells but enhances its expression during stress conditions induced by amino acid starvation in a EIF2AK4/GCN2-dependent manner. In addition to its role in regulating PKC-eta translation, also inhibits the kinase activity of PKC-eta as well as other protein kinases including PRKCD, PRKCQ and PRKCE but not PRKCA, PRKCG or PRKCZ. The sequence is that of PRKCH upstream open reading frame 2 from Homo sapiens (Human).